A 458-amino-acid chain; its full sequence is Methylenetetrahydrofolate--tRNA-(uracil-5-)-methyltransferase TrmFO (458 aa).

Residue 12–17 participates in FAD binding; it reads GAGLAG.

This sequence belongs to the MnmG family. TrmFO subfamily. It depends on FAD as a cofactor.

Its subcellular location is the cytoplasm. It carries out the reaction uridine(54) in tRNA + (6R)-5,10-methylene-5,6,7,8-tetrahydrofolate + NADH + H(+) = 5-methyluridine(54) in tRNA + (6S)-5,6,7,8-tetrahydrofolate + NAD(+). The catalysed reaction is uridine(54) in tRNA + (6R)-5,10-methylene-5,6,7,8-tetrahydrofolate + NADPH + H(+) = 5-methyluridine(54) in tRNA + (6S)-5,6,7,8-tetrahydrofolate + NADP(+). Its function is as follows. Catalyzes the folate-dependent formation of 5-methyl-uridine at position 54 (M-5-U54) in all tRNAs. This is Methylenetetrahydrofolate--tRNA-(uracil-5-)-methyltransferase TrmFO from Deinococcus geothermalis (strain DSM 11300 / CIP 105573 / AG-3a).